The following is a 418-amino-acid chain: MYQSPRGTEDILPEDQPYWHFVRQQAARIAALYGYQRTDTPVFEDAGLFVRSVGEGTDIVSKEMYTFEDRGGDKLTLRPEGTAPICRAYLEHGMQTRTKPVKLYYLSSIFRYDRPQAGRYRQHHQFGFEAIGEADASLDAEVIEMAWRFYNLLGINDLSLELNSIGCRECRPAYISALKAYYGQHEGKLCSDCKTRLDKNTLRLLDCKREECQCVAENAPRSADYLCPDCLAHYNRLKECLTVVDLPFHENFRLVRGLDYYSRTVFEIQPRIEGAQSTIGGGGRYDGLIEQLGGEPTPAIGFATGIERIILNLKRQGITPPPLPSPSVFLAYMGEAASLASIALASDLRKAGIGIYQTYAQKSIKAQLRQANSLGADWAVILGEEELKQGCAVLRNMKEAGQATIPLDQLICEIKKQI.

This sequence belongs to the class-II aminoacyl-tRNA synthetase family. In terms of assembly, homodimer.

It localises to the cytoplasm. The enzyme catalyses tRNA(His) + L-histidine + ATP = L-histidyl-tRNA(His) + AMP + diphosphate + H(+). In Dehalococcoides mccartyi (strain ATCC BAA-2266 / KCTC 15142 / 195) (Dehalococcoides ethenogenes (strain 195)), this protein is Histidine--tRNA ligase.